The sequence spans 112 residues: Hydrogenase maturation factor HypA (112 aa).

His-2 is a Ni(2+) binding site. Residues Cys-72, Cys-75, Cys-88, and Cys-91 each contribute to the Zn(2+) site.

It belongs to the HypA/HybF family.

Its function is as follows. Involved in the maturation of [NiFe] hydrogenases. Required for nickel insertion into the metal center of the hydrogenase. The polypeptide is Hydrogenase maturation factor HypA (Francisella philomiragia subsp. philomiragia (strain ATCC 25017 / CCUG 19701 / FSC 153 / O#319-036)).